The sequence spans 232 residues: Phosphatidylserine decarboxylase proenzyme (232 aa).

The active-site Schiff-base intermediate with substrate; via pyruvic acid is the S190. S190 is modified (pyruvic acid (Ser); by autocatalysis).

The protein belongs to the phosphatidylserine decarboxylase family. PSD-A subfamily. As to quaternary structure, heterodimer of a large membrane-associated beta subunit and a small pyruvoyl-containing alpha subunit. Pyruvate is required as a cofactor. Is synthesized initially as an inactive proenzyme. Formation of the active enzyme involves a self-maturation process in which the active site pyruvoyl group is generated from an internal serine residue via an autocatalytic post-translational modification. Two non-identical subunits are generated from the proenzyme in this reaction, and the pyruvate is formed at the N-terminus of the alpha chain, which is derived from the carboxyl end of the proenzyme. The post-translation cleavage follows an unusual pathway, termed non-hydrolytic serinolysis, in which the side chain hydroxyl group of the serine supplies its oxygen atom to form the C-terminus of the beta chain, while the remainder of the serine residue undergoes an oxidative deamination to produce ammonia and the pyruvoyl prosthetic group on the alpha chain.

The protein resides in the cell membrane. The enzyme catalyses a 1,2-diacyl-sn-glycero-3-phospho-L-serine + H(+) = a 1,2-diacyl-sn-glycero-3-phosphoethanolamine + CO2. It functions in the pathway phospholipid metabolism; phosphatidylethanolamine biosynthesis; phosphatidylethanolamine from CDP-diacylglycerol: step 2/2. Its function is as follows. Catalyzes the formation of phosphatidylethanolamine (PtdEtn) from phosphatidylserine (PtdSer). The sequence is that of Phosphatidylserine decarboxylase proenzyme from Allorhizobium ampelinum (strain ATCC BAA-846 / DSM 112012 / S4) (Agrobacterium vitis (strain S4)).